The following is a 185-amino-acid chain: Elongation factor P (185 aa).

The protein belongs to the elongation factor P family.

The protein resides in the cytoplasm. The protein operates within protein biosynthesis; polypeptide chain elongation. In terms of biological role, involved in peptide bond synthesis. Stimulates efficient translation and peptide-bond synthesis on native or reconstituted 70S ribosomes in vitro. Probably functions indirectly by altering the affinity of the ribosome for aminoacyl-tRNA, thus increasing their reactivity as acceptors for peptidyl transferase. In Bacillus anthracis (strain CDC 684 / NRRL 3495), this protein is Elongation factor P.